The chain runs to 361 residues: sn-glycerol-3-phosphate import ATP-binding protein UgpC (361 aa).

Residues 4-235 enclose the ABC transporter domain; sequence VTLRNVRKTY…PATTFVASFI (232 aa). 37-44 provides a ligand contact to ATP; the sequence is GPSGCGKS.

Belongs to the ABC transporter superfamily. sn-glycerol-3-phosphate importer (TC 3.A.1.1.3) family. The complex is composed of two ATP-binding proteins (UgpC), two transmembrane proteins (UgpA and UgpE) and a solute-binding protein (UgpB).

It localises to the cell inner membrane. It catalyses the reaction sn-glycerol 3-phosphate(out) + ATP + H2O = sn-glycerol 3-phosphate(in) + ADP + phosphate + H(+). Part of the ABC transporter complex UgpBAEC involved in sn-glycerol-3-phosphate (G3P) import. Responsible for energy coupling to the transport system. This chain is sn-glycerol-3-phosphate import ATP-binding protein UgpC, found in Rhodopseudomonas palustris (strain BisA53).